The primary structure comprises 100 residues: U-myrmeciitoxin(01)-Mg7b (100 aa).

An N-terminal signal peptide occupies residues 1–17 (MKLSCLSLALAIILVLA). A propeptide spanning residues 18 to 50 (IVYSPHMEVKALADAEPDAIGFADAFGEADAEP) is cleaved from the precursor. S85 carries an O-linked (GalNAc...) serine glycan. Residues T94 and T95 are each glycosylated (O-linked (GalNAc...) threonine).

It belongs to the formicidae venom precursor-01 superfamily. Post-translationally, glycosylation is critical to maintaining the aqueous solubility of this protein, but does not directly contribute to its activity. In terms of tissue distribution, expressed by the venom gland.

Its subcellular location is the secreted. It is found in the target cell membrane. Functionally, neurotoxin that triggers pain behavior and inflammation in mammals, and is paralytic and lethal to insects. Causes a time-dependent increase in cell leak current. May act by targeting membranes. The protein is U-myrmeciitoxin(01)-Mg7b of Myrmecia gulosa (Red bulldog ant).